The chain runs to 62 residues: Cobrotoxin II (62 aa).

A compositionally biased stretch (polar residues) spans 1–16 (LECHNQQSSQTPTTTG). The tract at residues 1–23 (LECHNQQSSQTPTTTGCSGGENN) is disordered. 4 disulfide bridges follow: Cys3–Cys24, Cys17–Cys41, Cys43–Cys54, and Cys55–Cys60.

It belongs to the three-finger toxin family. Short-chain subfamily. Type I alpha-neurotoxin sub-subfamily. In terms of tissue distribution, expressed by the venom gland.

It localises to the secreted. In terms of biological role, binds to muscle nicotinic acetylcholine receptor (nAChR) and inhibit acetylcholine from binding to the receptor, thereby impairing neuromuscular transmission. The sequence is that of Cobrotoxin II from Naja kaouthia (Monocled cobra).